The primary structure comprises 208 residues: 3-isopropylmalate dehydratase small subunit 2 (208 aa).

A disordered region spans residues 163-208; the sequence is EGERLDNASTSAGHGHAGTPLGDDPAKEDGPRPEQASGHQKEEHHA.

It belongs to the LeuD family. LeuD type 2 subfamily. In terms of assembly, heterodimer of LeuC and LeuD.

The catalysed reaction is (2R,3S)-3-isopropylmalate = (2S)-2-isopropylmalate. It functions in the pathway amino-acid biosynthesis; L-leucine biosynthesis; L-leucine from 3-methyl-2-oxobutanoate: step 2/4. Catalyzes the isomerization between 2-isopropylmalate and 3-isopropylmalate, via the formation of 2-isopropylmaleate. This chain is 3-isopropylmalate dehydratase small subunit 2 (leuD2), found in Deinococcus radiodurans (strain ATCC 13939 / DSM 20539 / JCM 16871 / CCUG 27074 / LMG 4051 / NBRC 15346 / NCIMB 9279 / VKM B-1422 / R1).